We begin with the raw amino-acid sequence, 694 residues long: Polyphosphate kinase (694 aa).

Residue Asn45 participates in ATP binding. 2 residues coordinate Mg(2+): Arg367 and Arg397. Catalysis depends on His427, which acts as the Phosphohistidine intermediate. Residues Tyr460, Arg553, and His580 each coordinate ATP.

This sequence belongs to the polyphosphate kinase 1 (PPK1) family. Requires Mg(2+) as cofactor. An intermediate of this reaction is the autophosphorylated ppk in which a phosphate is covalently linked to a histidine residue through a N-P bond.

The catalysed reaction is [phosphate](n) + ATP = [phosphate](n+1) + ADP. Catalyzes the reversible transfer of the terminal phosphate of ATP to form a long-chain polyphosphate (polyP). This chain is Polyphosphate kinase, found in Campylobacter coli.